The following is a 212-amino-acid chain: ATP-dependent dethiobiotin synthetase BioD (212 aa).

13 to 18 contributes to the ATP binding site; the sequence is GIGKTV. Thr-17 serves as a coordination point for Mg(2+). Lys-33 is a catalytic residue. Residue Ser-37 coordinates substrate. Mg(2+) is bound at residue Glu-100. ATP is bound by residues 100 to 103 and 184 to 186; these read EGAG and PLL.

Belongs to the dethiobiotin synthetase family. As to quaternary structure, homodimer. Requires Mg(2+) as cofactor.

It is found in the cytoplasm. The enzyme catalyses (7R,8S)-7,8-diammoniononanoate + CO2 + ATP = (4R,5S)-dethiobiotin + ADP + phosphate + 3 H(+). It functions in the pathway cofactor biosynthesis; biotin biosynthesis; biotin from 7,8-diaminononanoate: step 1/2. Functionally, catalyzes a mechanistically unusual reaction, the ATP-dependent insertion of CO2 between the N7 and N8 nitrogen atoms of 7,8-diaminopelargonic acid (DAPA, also called 7,8-diammoniononanoate) to form a ureido ring. The sequence is that of ATP-dependent dethiobiotin synthetase BioD from Brucella melitensis biotype 2 (strain ATCC 23457).